Reading from the N-terminus, the 269-residue chain is uncharacterized protein (269 aa).

An ATP-binding site is contributed by 103-110; sequence GIFTMGKS.

This is an uncharacterized protein from Mycoplasma pneumoniae (strain ATCC 29342 / M129 / Subtype 1) (Mycoplasmoides pneumoniae).